Consider the following 152-residue polypeptide: CASP-like protein 5B3 (152 aa).

Topologically, residues Met1–Cys21 are cytoplasmic. Helical transmembrane passes span Val22–Ala42 and Phe43–Leu63. Over Asp64–Pro77 the chain is Extracellular. Residues Val78–Ala98 form a helical membrane-spanning segment. At Ser99–Ser127 the chain is on the cytoplasmic side. A helical membrane pass occupies residues Val128–Leu148. Topologically, residues Leu149–Ala152 are extracellular.

The protein belongs to the Casparian strip membrane proteins (CASP) family. Homodimer and heterodimers. Expressed in the stele of the root and in leaves.

The protein localises to the cell membrane. This Arabidopsis thaliana (Mouse-ear cress) protein is CASP-like protein 5B3.